Reading from the N-terminus, the 354-residue chain is MPFFSYDTVKKILFNFDPETAHTLAGIGLRALPCCPPLLHFITKQYFVTDPMIEQEFFGRTFKNPVGLGAGFDKNGQYITSMPALGFGFTEIGTVTPKPQPGNPKPRLFRLLEDRSIQNAMGFNNRGMGYMLEQLNKLYFFDYPIGINIGKNKVTSEEKALEDYETLFHAFKDYGDYIVINISSPNTPGLRDLQNEQFIKDIFAMAKRITEQPVLLKIAPDMTHEDAIALCNTAVDAGAAGIIATNTTIDYSLTPHAKDFGGISGALLTEKSYQLFKAIGKELYGKTLLISVGGIDSAEEAYRRIKAGASLVQVYSMLIYKGPALIREINEGLIKLLKKDGYTHISEAIGADWK.

Residues alanine 70–lysine 74 and threonine 94 contribute to the FMN site. Residue lysine 74 participates in substrate binding. Asparagine 119–phenylalanine 123 is a binding site for substrate. Asparagine 148 and asparagine 181 together coordinate FMN. Asparagine 181 is a substrate binding site. Serine 184 serves as the catalytic Nucleophile. A substrate-binding site is contributed by asparagine 186. Residues lysine 217 and threonine 245 each coordinate FMN. A substrate-binding site is contributed by asparagine 246 to threonine 247. Residues glycine 265, glycine 294, and tyrosine 315 to serine 316 contribute to the FMN site.

The protein belongs to the dihydroorotate dehydrogenase family. Type 2 subfamily. As to quaternary structure, monomer. The cofactor is FMN.

Its subcellular location is the cell membrane. The catalysed reaction is (S)-dihydroorotate + a quinone = orotate + a quinol. Its pathway is pyrimidine metabolism; UMP biosynthesis via de novo pathway; orotate from (S)-dihydroorotate (quinone route): step 1/1. Functionally, catalyzes the conversion of dihydroorotate to orotate with quinone as electron acceptor. In Sulfurovum sp. (strain NBC37-1), this protein is Dihydroorotate dehydrogenase (quinone).